The chain runs to 426 residues: Enolase (426 aa).

Glutamine 163 provides a ligand contact to (2R)-2-phosphoglycerate. The Proton donor role is filled by glutamate 205. Positions 242, 285, and 312 each coordinate Mg(2+). Lysine 337, arginine 366, serine 367, and lysine 388 together coordinate (2R)-2-phosphoglycerate. The active-site Proton acceptor is lysine 337.

This sequence belongs to the enolase family. Mg(2+) serves as cofactor.

It localises to the cytoplasm. The protein resides in the secreted. The protein localises to the cell surface. The enzyme catalyses (2R)-2-phosphoglycerate = phosphoenolpyruvate + H2O. It participates in carbohydrate degradation; glycolysis; pyruvate from D-glyceraldehyde 3-phosphate: step 4/5. In terms of biological role, catalyzes the reversible conversion of 2-phosphoglycerate (2-PG) into phosphoenolpyruvate (PEP). It is essential for the degradation of carbohydrates via glycolysis. The chain is Enolase from Gluconobacter oxydans (strain 621H) (Gluconobacter suboxydans).